We begin with the raw amino-acid sequence, 282 residues long: Large ribosomal subunit protein uL4c (282 aa).

Residues 1–43 (MAASLSFFSSSIFLSNPNIQSSKHLLFRSPKQLSVAAIATIRS) constitute a chloroplast transit peptide. Disordered regions lie at residues 86–133 (RNQR…GGVV) and 251–282 (RYGD…ESSE). The segment covering 255–282 (ENEWEDEEEDDQEDNDGGEAEESTESSE) has biased composition (acidic residues).

This sequence belongs to the universal ribosomal protein uL4 family. In terms of assembly, part of the 50S ribosomal subunit.

Its subcellular location is the plastid. The protein resides in the chloroplast. This protein binds directly and specifically to 23S rRNA. May play a role in plastid transcriptional regulation. In Nicotiana tabacum (Common tobacco), this protein is Large ribosomal subunit protein uL4c (RPL4).